The chain runs to 359 residues: Type-1 angiotensin II receptor (359 aa).

Topologically, residues 1–25 (MILNSSTEDGIKRIQDDCPKAGRHN) are extracellular. The N-linked (GlcNAc...) (complex) asparagine glycan is linked to N4. Positions 15 and 17 each coordinate angiotensin II. 2 cysteine pairs are disulfide-bonded: C18-C274 and C101-C180. A helical membrane pass occupies residues 26-55 (YIFVMIPTLYSIIFVVGIFGNSLVVIVIYF). Topologically, residues 56-61 (YMKLKT) are cytoplasmic. Residues 62–89 (VASVFLLNLALADLCFLLTLPLWAVYTA) form a helical membrane-spanning segment. The Extracellular portion of the chain corresponds to 90–98 (MEYRWPFGN). A helical transmembrane segment spans residues 99-125 (YLCKIASASVSFNLYASVFLLTCLSID). The Cytoplasmic segment spans residues 126 to 141 (RYLAIVHPMKSRLRRT). The helical transmembrane segment at 142 to 165 (MLVAKVTCIIIWLLAGLASLPAII) threads the bilayer. Topologically, residues 166–190 (HRNVFFIENTNITVCAFHYESQNST) are extracellular. Residue R167 participates in angiotensin II binding. An N-linked (GlcNAc...) asparagine glycan is attached at N176. Angiotensin II contacts are provided by F182, H183, and Y184. N188 carries an N-linked (GlcNAc...) asparagine glycan. Residues 191-216 (LPIGLGLTKNILGFLFPFLIILTSYT) traverse the membrane as a helical segment. K199 is an angiotensin II binding site. Residues 217-239 (LIWKALKKAYEIQKNKPRNDDIF) are Cytoplasmic-facing. The chain crosses the membrane as a helical span at residues 240 to 268 (KIIMAIVLFFFFSWIPHQIFTFLDVLIQL). Topologically, residues 269–278 (GIIRDCRIAD) are extracellular. The chain crosses the membrane as a helical span at residues 279–304 (IVDTAMPITICIAYFNNCLNPLFYGF). The Cytoplasmic segment spans residues 305 to 359 (LGKKFKRYFLQLLKYIPPKAKSHSNLSTKMSTLSYRPSDNVSSSTKKPAPCFEVE). Polar residues predominate over residues 335 to 350 (STLSYRPSDNVSSSTK). The disordered stretch occupies residues 335-359 (STLSYRPSDNVSSSTKKPAPCFEVE). C355 carries S-palmitoyl cysteine lipidation.

The protein belongs to the G-protein coupled receptor 1 family. As to quaternary structure, interacts with MAS1. Interacts with ARRB1. Interacts with FLNA (via filamin repeat 21); increases PKA-mediated phosphorylation of FLNA. C-terminal Ser or Thr residues may be phosphorylated. Liver, lung, adrenal and adrenocortical adenomas.

Its subcellular location is the cell membrane. With respect to regulation, strongly inhibited by anti-hypertensive drugs losartan, candesartan, valsartan, irbesartan, telmisartan, eprosartan, olmesartan and azilsartan, most of which share a common biphenyl-tetrazole scaffold. In terms of biological role, receptor for angiotensin II, a vasoconstricting peptide, which acts as a key regulator of blood pressure and sodium retention by the kidney. The activated receptor in turn couples to G-alpha proteins G(q) (GNAQ, GNA11, GNA14 or GNA15) and thus activates phospholipase C and increases the cytosolic Ca(2+) concentrations, which in turn triggers cellular responses such as stimulation of protein kinase C. Functionally, (Microbial infection) During SARS coronavirus-2/SARS-CoV-2 infection, it is able to recognize and internalize the complex formed by secreted ACE2 and SARS-CoV-2 spike protein through DNM2/dynamin 2-dependent endocytosis. This is Type-1 angiotensin II receptor from Homo sapiens (Human).